Reading from the N-terminus, the 151-residue chain is Acidic phospholipase A2 5 (151 aa).

Positions 1–27 (MYPAHLLVLLAVCVSLLGAASIPARPL) are cleaved as a signal peptide. 7 cysteine pairs are disulfide-bonded: C38–C104, C54–C151, C56–C72, C71–C132, C78–C125, C88–C118, and C111–C123. Y55, G57, and G59 together coordinate Ca(2+). The active site involves H75. D76 is a Ca(2+) binding site. Residue D126 is part of the active site.

It belongs to the phospholipase A2 family. Group I subfamily. D49 sub-subfamily. It depends on Ca(2+) as a cofactor. In terms of tissue distribution, expressed by the venom gland.

It localises to the secreted. The catalysed reaction is a 1,2-diacyl-sn-glycero-3-phosphocholine + H2O = a 1-acyl-sn-glycero-3-phosphocholine + a fatty acid + H(+). PLA2 catalyzes the calcium-dependent hydrolysis of the 2-acyl groups in 3-sn-phosphoglycerides. This chain is Acidic phospholipase A2 5, found in Tropidechis carinatus (Australian rough-scaled snake).